A 258-amino-acid polypeptide reads, in one-letter code: MERKHHFVLVHNAYHGAWIWYKLKPLLESAGHRVTAVELAASGIDPRPIQAVETVDEYSKPLIETLKSLPENEEVILVGFSFGGINIALAADIFPAKIKVLVFLNAFLPDTTHVPSHVLDKYMEMPGGLGDCEFSSHETRNGTMSLLKMGPKFMKARLYQNCPIEDYELAKMLHRQGSFFTEDLSKKEKFSEEGYGSVQRVYVMSSEDKAIPCDFIRWMIDNFNVSKVYEIDGGDHMVMLSKPQKLFDSLSAIATDYM.

Residues Ser-81 and His-236 each act as proton donor/acceptor in the active site.

The protein belongs to the AB hydrolase superfamily. Hydroxynitrile lyase family. Homodimer.

The enzyme catalyses (R)-mandelonitrile = benzaldehyde + hydrogen cyanide. Functionally, involved in cyanogenesis, the release of HCN from injured tissues. Displays R-selective hydroxynitrile lyase activity. Also accepts nitromethane (MeNO2) as a donor in a reaction with aromatic aldehydes to yield (R)-beta-nitro alcohols. The polypeptide is Alpha-hydroxynitrile lyase (Arabidopsis thaliana (Mouse-ear cress)).